Consider the following 248-residue polypeptide: MAESEAKQQPETVHGEEKRLKYLDFVQVAAIYVIVCFSSLYEYAKENSGPLKPGVQTVEGTVKTVIGPVYEKFYDVPFELLMFVDRKVEASIYELERHVPSLVKRASCQAITVAQKAPELALAVASEVQRPGVVDTAKNITKNVYSKCEPTAKELCSKYEPVAEQYAVSAWRSLNRLPLFPQVAQVVVPTAAYWSEKYNQSVSYTAERGYTVALYLPLIPTERIAKVFQDGSALPTVETNGNAIPLAQ.

Belongs to the REF/SRPP family.

In Vitis riparia (Frost grape), this protein is Stress-related protein (SRP).